Reading from the N-terminus, the 59-residue chain is Photosystem II reaction center protein K (59 aa).

The propeptide occupies 1–22 (MLNIFSLICLNSALYPSSLFFA). The chain crosses the membrane as a helical span at residues 38–58 (MPVIPLFFFLLAFVWQAAVSF).

The protein belongs to the PsbK family. As to quaternary structure, PSII is composed of 1 copy each of membrane proteins PsbA, PsbB, PsbC, PsbD, PsbE, PsbF, PsbH, PsbI, PsbJ, PsbK, PsbL, PsbM, PsbT, PsbX, PsbY, PsbZ, Psb30/Ycf12, at least 3 peripheral proteins of the oxygen-evolving complex and a large number of cofactors. It forms dimeric complexes.

Its subcellular location is the plastid. The protein resides in the chloroplast thylakoid membrane. Functionally, one of the components of the core complex of photosystem II (PSII). PSII is a light-driven water:plastoquinone oxidoreductase that uses light energy to abstract electrons from H(2)O, generating O(2) and a proton gradient subsequently used for ATP formation. It consists of a core antenna complex that captures photons, and an electron transfer chain that converts photonic excitation into a charge separation. The chain is Photosystem II reaction center protein K from Lactuca sativa (Garden lettuce).